Reading from the N-terminus, the 205-residue chain is Ras-related protein Rab-1A (205 aa).

GTP contacts are provided by residues 18-26 (GDSGVGKSC), 36-43 (YTESYIST), 66-70 (DTAGQ), 124-127 (NKSD), and 154-156 (SAK). Positions 40–48 (YISTIGVDF) match the Effector region motif. Positions 183-198 (SDSKPSVKINSSTPVS) are enriched in polar residues. Residues 183–205 (SDSKPSVKINSSTPVSANKGGCC) are disordered. Residues cysteine 204 and cysteine 205 are each lipidated (S-geranylgeranyl cysteine).

The protein belongs to the small GTPase superfamily. Rab family.

The protein localises to the golgi apparatus. It is found in the endoplasmic reticulum. Probably required for transit of protein from the ER through Golgi compartment. The sequence is that of Ras-related protein Rab-1A (RAB1A) from Lymnaea stagnalis (Great pond snail).